Here is a 371-residue protein sequence, read N- to C-terminus: Solute carrier family 35 member F6 (371 aa).

The first 18 residues, methionine 1 to glycine 18, serve as a signal peptide directing secretion. The next 2 membrane-spanning stretches (helical) occupy residues phenylalanine 48–leucine 68 and leucine 89–leucine 109. Residues leucine 104–leucine 160 form the EamA domain. N-linked (GlcNAc...) asparagine glycosylation occurs at asparagine 110. The next 7 helical transmembrane spans lie at phenylalanine 117–glycine 137, leucine 140–leucine 160, valine 176–leucine 196, glycine 216–glycine 236, leucine 261–isoleucine 281, leucine 295–tryptophan 312, and alanine 317–leucine 336. The disordered stretch occupies residues glutamate 352–serine 371. Position 365 is a phosphothreonine (threonine 365).

Belongs to the SLC35F solute transporter family. In terms of assembly, interacts with SLC25A5. In terms of tissue distribution, expressed in pancreatic ductal adenocarcinoma (PDAC) (at protein level). Strongly expressed in prostate and thyroid. Weakly expressed in lung, heart, liver and kidney.

It localises to the mitochondrion. The protein localises to the lysosome membrane. Its function is as follows. Involved in the maintenance of mitochondrial membrane potential in pancreatic ductal adenocarcinoma (PDAC) cells. Promotes pancreatic ductal adenocarcinoma (PDAC) cell growth. May play a role as a nucleotide-sugar transporter. The sequence is that of Solute carrier family 35 member F6 (SLC35F6) from Homo sapiens (Human).